A 287-amino-acid polypeptide reads, in one-letter code: Protein TMEPAI (287 aa).

The Lumenal portion of the chain corresponds to Met1–Glu40. A helical transmembrane segment spans residues Phe41–Ser63. The Cytoplasmic segment spans residues His64–Leu287. The PPxY motif 1 motif lies at Pro158 to Tyr161. The SMAD interaction motif (SIM) motif lies at Pro186 to Arg189. The PPxY motif 2 signature appears at Pro229 to Tyr232. Residues Tyr239–Gly258 form a disordered region. Positions Ser242 to Pro252 are enriched in polar residues.

The protein belongs to the PMEPA1 family. In terms of assembly, interacts with NEDD4 (via PPxY motifs). Interacts with AR. Interacts with LDLRAD4. Interacts (via the SMAD interaction motif) with SMAD2 and SMAD3. In terms of tissue distribution, highest expression in prostate. Also expressed in ovary.

It is found in the early endosome membrane. It localises to the golgi apparatus membrane. Functions as a negative regulator of TGF-beta signaling and thereby probably plays a role in cell proliferation, differentiation, apoptosis, motility, extracellular matrix production and immunosuppression. In the canonical TGF-beta pathway, ZFYVE9/SARA recruits the intracellular signal transducer and transcriptional modulators SMAD2 and SMAD3 to the TGF-beta receptor. Phosphorylated by the receptor, SMAD2 and SMAD3 then form a heteromeric complex with SMAD4 that translocates to the nucleus to regulate transcription. Through interaction with SMAD2 and SMAD3, LDLRAD4 may compete with ZFYVE9 and SMAD4 and prevent propagation of the intracellular signal. Also involved in down-regulation of the androgen receptor (AR), enhancing ubiquitination and proteasome-mediated degradation of AR, probably by recruiting NEDD4. In Homo sapiens (Human), this protein is Protein TMEPAI (PMEPA1).